A 379-amino-acid polypeptide reads, in one-letter code: Chaperone protein DnaJ (379 aa).

The 65-residue stretch at 5–69 (DYYEVLGISK…NKRASYDQFG (65 aa)) folds into the J domain. The CR-type zinc finger occupies 136 to 218 (GTTKEISIRK…CHGKGTENKT (83 aa)). The Zn(2+) site is built by C149, C152, C166, C169, C192, C195, C206, and C209. CXXCXGXG motif repeat units lie at residues 149-156 (CETCHGDG), 166-173 (CSYCNGAG), 192-199 (CPKCNGSG), and 206-213 (CPTCHGKG).

The protein belongs to the DnaJ family. In terms of assembly, homodimer. Zn(2+) is required as a cofactor.

It is found in the cytoplasm. Participates actively in the response to hyperosmotic and heat shock by preventing the aggregation of stress-denatured proteins and by disaggregating proteins, also in an autonomous, DnaK-independent fashion. Unfolded proteins bind initially to DnaJ; upon interaction with the DnaJ-bound protein, DnaK hydrolyzes its bound ATP, resulting in the formation of a stable complex. GrpE releases ADP from DnaK; ATP binding to DnaK triggers the release of the substrate protein, thus completing the reaction cycle. Several rounds of ATP-dependent interactions between DnaJ, DnaK and GrpE are required for fully efficient folding. Also involved, together with DnaK and GrpE, in the DNA replication of plasmids through activation of initiation proteins. In Staphylococcus aureus (strain bovine RF122 / ET3-1), this protein is Chaperone protein DnaJ.